The sequence spans 231 residues: MTMHEFFENFGIKINDSKIFSTALTHNSYANETKTKETYQRLEFLGDAVLQMYVSKFLYLNFTNAPEGKLTKTRSDIVRQETLSEIAKMIDLGKIIRLGQGEIKSKGYEKPSILSDVYEAVTAAIYLDQTEEVLISWIKSTIFKYIEKNDYKELNHDYKSELQEIIQAEIRSDLEYRVESQKHIEKDNKIEYTVSVNLDGKKYGIGTGFSKQEASQNAAKDCLNKLKKSAK.

The RNase III domain maps to 3-130 (MHEFFENFGI…VTAAIYLDQT (128 aa)). Residue E43 coordinates Mg(2+). D47 is an active-site residue. Residues D116 and E119 each contribute to the Mg(2+) site. The active site involves E119. Residues 157 to 228 (DYKSELQEII…AKDCLNKLKK (72 aa)) enclose the DRBM domain.

This sequence belongs to the ribonuclease III family. In terms of assembly, homodimer. The cofactor is Mg(2+).

It localises to the cytoplasm. The catalysed reaction is Endonucleolytic cleavage to 5'-phosphomonoester.. Its function is as follows. Digests double-stranded RNA. Involved in the processing of primary rRNA transcript to yield the immediate precursors to the large and small rRNAs (23S and 16S). Processes some mRNAs, and tRNAs when they are encoded in the rRNA operon. Processes pre-crRNA and tracrRNA of type II CRISPR loci if present in the organism. The chain is Ribonuclease 3 from Mesoplasma florum (strain ATCC 33453 / NBRC 100688 / NCTC 11704 / L1) (Acholeplasma florum).